The primary structure comprises 403 residues: Metacaspase-1 (403 aa).

The tract at residues 1–95 (MFPGSGHNTY…PSGSQSFGQN (95 aa)) is disordered. Pro residues predominate over residues 13 to 22 (YPPPQGPPPN). 2 stretches are compositionally biased toward low complexity: residues 23-34 (NNGYNSGPNNSY) and 49-62 (QYDQ…QSQP). Active-site residues include His-193 and Cys-249.

The protein belongs to the peptidase C14B family.

Involved in cell death (apoptosis). The polypeptide is Metacaspase-1 (MCA1) (Scheffersomyces stipitis (strain ATCC 58785 / CBS 6054 / NBRC 10063 / NRRL Y-11545) (Yeast)).